Here is a 445-residue protein sequence, read N- to C-terminus: Coronin-A (445 aa).

4 WD repeats span residues 77-117 (GHKS…LTDS), 127-167 (GHKR…NLTT), 170-209 (GHSDMITSCEWNHNGSQIVTTCKDKKARVFDPRTNSIVNE), and 259-299 (DSAS…PYIH). A coiled-coil region spans residues 410 to 444 (KNEKELREEYEKLKIRVAYLESEIVKKDAKIKELT).

The protein belongs to the WD repeat coronin family. As to quaternary structure, binds to F-actin.

It localises to the cell surface. Its function is as follows. Required for normal motility. Participates in cytokinesis. This is Coronin-A (corA) from Dictyostelium discoideum (Social amoeba).